The sequence spans 205 residues: uncharacterized protein (205 aa).

The protein to M.jannaschii MJ0638 and MJ1252 and M.tuberculosis Rv2003c.

This is an uncharacterized protein from Methanocaldococcus jannaschii (strain ATCC 43067 / DSM 2661 / JAL-1 / JCM 10045 / NBRC 100440) (Methanococcus jannaschii).